The chain runs to 169 residues: S-ribosylhomocysteine lyase (169 aa).

The Fe cation site is built by His54, His58, and Cys128.

This sequence belongs to the LuxS family. As to quaternary structure, homodimer. Fe cation serves as cofactor.

The enzyme catalyses S-(5-deoxy-D-ribos-5-yl)-L-homocysteine = (S)-4,5-dihydroxypentane-2,3-dione + L-homocysteine. Functionally, involved in the synthesis of autoinducer 2 (AI-2) which is secreted by bacteria and is used to communicate both the cell density and the metabolic potential of the environment. The regulation of gene expression in response to changes in cell density is called quorum sensing. Catalyzes the transformation of S-ribosylhomocysteine (RHC) to homocysteine (HC) and 4,5-dihydroxy-2,3-pentadione (DPD). The protein is S-ribosylhomocysteine lyase of Shewanella piezotolerans (strain WP3 / JCM 13877).